The following is a 1021-amino-acid chain: DEKSAGGISVPGPMGPSGPRGLPGPPGAPGPQGFQGPPGEPGEPGASGPMGPRGPPGPPGKNGDDGEAGKPGRPGERGPPGPQGARGLPGTAGLPGMKGHRGFSGLDGAKGDAGPAGPKGEPGSPGENGAPGQMGPRGLPGERGRPGASGPAGARGNDGATGAAGPPGPTGPAGPPGFPGAVGAKGEAGPQGARGSEGPQGVRGEPGPPGPAGAAGPAGNPGADGQPGAKGANGAPGIAGAPGFPGARGPSGPQGPSGAPGPKGNSGEPGAPGNKGDTGAKGEPGPTGIQGPPGPAGEEGKRGARGEPGPTGLPGPPGERGGPGSRGFPGADGIAGPKGPAGERGSPGPAGPKGSPGEAGRPGEAGLPGAKGLTGSPGSPGPDGKTGPPGPAGQDGRPGPAGPPGARGQAGVMGFPGPKGAAGEPGKAGERGVPGPPGAVGPAGKDGEAGAQGPPGPAGPAGERGEQGPAGPGFQGLPGPAGPPGEAGKPGEQGVPGDLGAPGPSGARGERGFPGERGVQGPPGPAGPRGNGAPGNDGAKGDAGAPGAPGSQGAPGLQGMPGERGAAGLPGPKGDRGDAGPKGADGAPGKDGVRGLTGPIGPPGPAGATGDKGEAGPSGPAGPTGARGAPGDRGEPGPPGPAGFAGPPGADGQPGAKGEPGDAGAKGDAGPSGPAGPTGPPGPIGNVGAPGPKGARGSAGPPGATGFPGAAGRVGPPGPSGNAGPPGPPGPVGKEGGKGPRGETGPAGRPGEVGPPGPPGPSGEKGSPGADGPAGAPGTPGPQGIGQRGVVGLPGQRGERGFPGLPGPSGEPGKQGPSGSSGERGPPGPMGPPGLAGPPGEAGREGSPGAEGSPGRDGSPGPKGDRGETGPGPPGAPGAPGAPGPVGPAGKSGDRGETGPSGPAGPAGPAGARGPAGPQGPRGDKGETGEQGDRGIKGHRGFSGLQGPAGPPGSPGEQGPSGASGPAGPRGPPGSAGTPGKDGLNGLPGPIGPPGPRGRTGDAGPVGPPGPPGPPGPPGPP.

Residues 1–1021 (DEKSAGGISV…PGPPGPPGPP (1021 aa)) form a disordered region. Residue lysine 3 is modified to Allysine. Serine 4 bears the Phosphoserine mark. A 4-hydroxyproline mark is found at proline 23, proline 26, proline 29, proline 38, proline 41, proline 44, proline 59, proline 74, proline 80, proline 89, and proline 95. Over residues 31–50 (PQGFQGPPGEPGEPGASGPM) the composition is skewed to low complexity. Over residues 62–76 (NGDDGEAGKPGRPGE) the composition is skewed to basic and acidic residues. 5-hydroxylysine; alternate is present on lysine 98. Lysine 98 carries an O-linked (Gal...) hydroxylysine; alternate glycan. Serine 104 bears the Phosphoserine mark. Over residues 112–128 (DAGPAGPKGEPGSPGEN) the composition is skewed to low complexity. Proline 122, proline 125, proline 131, proline 140, proline 146, proline 167, proline 176, proline 179, proline 206, proline 209, proline 221, proline 227, proline 236, proline 242, proline 245, and proline 260 each carry 4-hydroxyproline. The span at 146–164 (PGASGPAGARGNDGATGAA) shows a compositional bias: low complexity. Over residues 166–178 (PPGPTGPAGPPGF) the composition is skewed to pro residues. Residues 212 to 262 (AGAAGPAGNPGADGQPGAKGANGAPGIAGAPGFPGARGPSGPQGPSGAPGP) show a composition bias toward low complexity. At lysine 263 the chain carries 5-hydroxylysine. 8 positions are modified to 4-hydroxyproline: proline 269, proline 272, proline 284, proline 293, proline 308, proline 314, proline 323, and proline 329. Positions 318-327 (GERGGPGSRG) are enriched in gly residues. Position 338 is a 5-hydroxylysine (lysine 338). 4-hydroxyproline is present on residues proline 347, proline 356, proline 362, proline 368, proline 377, proline 380, proline 389, proline 398, proline 404, proline 416, proline 425, proline 434, proline 437, proline 455, proline 472, proline 478, proline 484, proline 490, proline 496, proline 502, proline 514, proline 523, proline 534, proline 546, proline 549, proline 555, proline 561, and proline 570. A compositionally biased stretch (low complexity) spans 371 to 425 (KGLTGSPGSPGPDGKTGPPGPAGQDGRPGPAGPPGARGQAGVMGFPGPKGAAGEP). Residues 484-493 (PGEAGKPGEQ) show a composition bias toward low complexity. Low complexity predominate over residues 536–558 (NDGAKGDAGAPGAPGSQGAPGLQ). Lysine 582 is subject to 5-hydroxylysine. 2 positions are modified to 4-hydroxyproline: proline 588 and proline 603. The segment covering 615 to 629 (AGPSGPAGPTGARGA) has biased composition (low complexity). Serine 618 carries the post-translational modification Phosphoserine. 7 positions are modified to 4-hydroxyproline: proline 630, proline 636, proline 639, proline 648, proline 654, proline 681, and proline 690. Positions 642–672 (AGFAGPPGADGQPGAKGEPGDAGAKGDAGPS) are enriched in low complexity. Lysine 693 is subject to 5-hydroxylysine. Over residues 698 to 714 (SAGPPGATGFPGAAGRV) the composition is skewed to low complexity. A 4-hydroxyproline mark is found at proline 702 and proline 708. A 3-hydroxyproline modification is found at proline 716. 4-hydroxyproline is present on residues proline 717, proline 726, proline 729, proline 750, proline 759, proline 768, proline 777, proline 794, proline 803, proline 806, proline 812, proline 827, proline 833, proline 839, proline 848, and proline 854. Low complexity predominate over residues 743–752 (ETGPAGRPGE). Low complexity predominate over residues 762–777 (SGEKGSPGADGPAGAP). The segment covering 826 to 836 (PPGPMGPPGLA) has biased composition (pro residues). The span at 838–853 (PPGEAGREGSPGAEGS) shows a compositional bias: low complexity. Residue lysine 863 is modified to 5-hydroxylysine. Residues 871 to 886 (PGPPGAPGAPGAPGPV) show a composition bias toward pro residues. 4-hydroxyproline occurs at positions 874, 877, and 880. The span at 907 to 921 (AGPAGARGPAGPQGP) shows a compositional bias: low complexity. Over residues 922 to 936 (RGDKGETGEQGDRGI) the composition is skewed to basic and acidic residues. Position 925 is a 5-hydroxylysine (lysine 925). Lysine 937 carries the post-translational modification 5-hydroxylysine; alternate. O-linked (Gal...) hydroxylysine; alternate glycosylation is present at lysine 937. Residues proline 952, proline 955, proline 973, and proline 988 each carry the 4-hydroxyproline modification. The segment covering 955 to 988 (PGEQGPSGASGPAGPRGPPGSAGTPGKDGLNGLP) has biased composition (low complexity). Residue proline 993 is modified to 3-hydroxyproline. Proline 994 carries the post-translational modification 4-hydroxyproline. Residues 1006 to 1021 (VGPPGPPGPPGPPGPP) are compositionally biased toward pro residues. Proline 1008 bears the 3-hydroxyproline mark. Position 1009 is a 4-hydroxyproline (proline 1009). Residue proline 1011 is modified to 3-hydroxyproline. Position 1012 is a 4-hydroxyproline (proline 1012). Proline 1014 is modified (3-hydroxyproline). Proline 1015, proline 1018, and proline 1021 each carry 4-hydroxyproline.

The protein belongs to the fibrillar collagen family. As to quaternary structure, trimers of one alpha 2(I) and two alpha 1(I) chains. Post-translationally, contains mostly 4-hydroxyproline. Proline residues at the third position of the tripeptide repeating unit (G-X-Y) are hydroxylated in some or all of the chains. In terms of processing, contains 3-hydroxyproline at a few sites. This modification occurs on the first proline residue in the sequence motif Gly-Pro-Hyp, where Hyp is 4-hydroxyproline. Lysine residues at the third position of the tripeptide repeating unit (G-X-Y) are 5-hydroxylated in some or all of the chains. Post-translationally, O-glycosylated on hydroxylated lysine residues. The O-linked glycan consists of a Glc-Gal disaccharide. As to expression, expressed in bones.

It localises to the secreted. The protein resides in the extracellular space. It is found in the extracellular matrix. Its function is as follows. Type I collagen is a member of group I collagen (fibrillar forming collagen). This chain is Collagen alpha-1(I) chain, found in Doedicurus sp. (South American giant glyptodont).